A 190-amino-acid chain; its full sequence is Putative manganese efflux pump MntP (190 aa).

6 helical membrane passes run 5–25 (ALLALAVALAMDALAVAVATG), 41–61 (WHFGLFQAAMPIAGWFMGQGI), 64–84 (FVDAWAHWIAFGLLAFIGLKM), 105–125 (TSLIMLSVATSIDALAVGVTL), 127–147 (MLGLSIWMPAAVIGLVCLGLT), and 169–189 (ILGGAVLLGIGFKILHESGVF).

This sequence belongs to the MntP (TC 9.B.29) family.

The protein resides in the cell inner membrane. Functionally, probably functions as a manganese efflux pump. The chain is Putative manganese efflux pump MntP from Oleidesulfovibrio alaskensis (strain ATCC BAA-1058 / DSM 17464 / G20) (Desulfovibrio alaskensis).